A 251-amino-acid chain; its full sequence is Azurocidin (251 aa).

A signal peptide spans 1–19 (MTRLTVLALLAGLLASSRA). A propeptide spans 20–26 (GSSPLLD) (removed in mature form). Residues 25-26 (LD) constitute a propeptide, dipeptide found in non-mature form. The Peptidase S1 domain occupies 27–244 (IVGGRKARPR…FRDWIDGVLN (218 aa)). A possesses antibiotic activity region spans residues 46–70 (NQGRHFCGGALIHARFVMTAASCFQ). Cys-52 and Cys-68 form a disulfide bridge. A glycan (N-linked (GlcNAc...) asparagine; partial) is linked at Asn-126. The N-linked (GlcNAc...) asparagine glycan is linked to Asn-140. 3 disulfide bridges follow: Cys-149–Cys-207, Cys-180–Cys-186, and Cys-197–Cys-222. The N-linked (GlcNAc...) asparagine; partial glycan is linked to Asn-171. A propeptide spans 249–251 (GPA) (removed in mature form).

Belongs to the peptidase S1 family. Elastase subfamily. Post-translationally, cleavage of the N-terminal propeptide which is composed of 7 amino acids occurs in two steps. The initial cleavage of 5 amino acids is followed by the cleavage of a dipeptide to produce the mature form.

The protein resides in the cytoplasmic granule membrane. This is a neutrophil granule-derived antibacterial and monocyte- and fibroblast-specific chemotactic glycoprotein. Binds heparin. The cytotoxic action is limited to many species of Gram-negative bacteria; this specificity may be explained by a strong affinity of the very basic N-terminal half for the negatively charged lipopolysaccharides that are unique to the Gram-negative bacterial outer envelope. It may play a role in mediating recruitment of monocytes in the second wave of inflammation. Has antibacterial activity against the Gram-negative bacterium P.aeruginosa, this activity is inhibited by LPS from P.aeruginosa. Acting alone, it does not have antimicrobial activity against the Gram-negative bacteria A.actinomycetemcomitans ATCC 29532, A.actinomycetemcomitans NCTC 9709, A.actinomycetemcomitans FDC-Y4, H.aphrophilus ATCC 13252, E.corrodens ATCC 23834, C.sputigena ATCC 33123, Capnocytophaga sp ATCC 33124, Capnocytophaga sp ATCC 27872 or E.coli ML-35. Has antibacterial activity against C.sputigena ATCC 33123 when acting synergistically with either elastase or cathepsin G. This Homo sapiens (Human) protein is Azurocidin.